Consider the following 921-residue polypeptide: DNA mismatch repair protein MutS 1 (921 aa).

619–626 (GPNMSGKS) is an ATP binding site. The segment at 837-887 (FRDGAAQSGGAAAGSTAEPVATDGDPEHAPGEAAAEGPKGDERAASLDSET) is disordered. The span at 840-853 (GAAQSGGAAAGSTA) shows a compositional bias: low complexity.

This sequence belongs to the DNA mismatch repair MutS family.

Functionally, this protein is involved in the repair of mismatches in DNA. It is possible that it carries out the mismatch recognition step. This protein has a weak ATPase activity. The polypeptide is DNA mismatch repair protein MutS 1 (Haloarcula marismortui (strain ATCC 43049 / DSM 3752 / JCM 8966 / VKM B-1809) (Halobacterium marismortui)).